The sequence spans 385 residues: Mannitol-1-phosphate 5-dehydrogenase (385 aa).

Residue 3–14 (ALQFGAGNIGRG) participates in NAD(+) binding.

This sequence belongs to the mannitol dehydrogenase family.

It catalyses the reaction D-mannitol 1-phosphate + NAD(+) = beta-D-fructose 6-phosphate + NADH + H(+). The sequence is that of Mannitol-1-phosphate 5-dehydrogenase (mtlD) from Buchnera aphidicola subsp. Acyrthosiphon pisum (strain APS) (Acyrthosiphon pisum symbiotic bacterium).